The sequence spans 2139 residues: Voltage-dependent L-type calcium channel subunit alpha-1C (2139 aa).

The segment at M1–Y20 is disordered. Residues M1–K124 lie on the Cytoplasmic side of the membrane. The calmodulin-binding stretch occupies residues G47–A68. The tract at residues I73 to T98 is disordered. The span at Q80–K91 shows a compositional bias: basic residues. The stretch at N111 to F408 is one I repeat. A helical transmembrane segment spans residues P125–I143. Over Y144–N158 the chain is Extracellular. N153 carries N-linked (GlcNAc...) asparagine glycosylation. Residues L159–I179 form a helical membrane-spanning segment. The Cytoplasmic segment spans residues A180–N188. A helical membrane pass occupies residues A189–S209. The Extracellular portion of the chain corresponds to A210 to D232. Residues V233–V251 traverse the membrane as a helical segment. Over P252–L268 the chain is Cytoplasmic. The chain crosses the membrane as a helical span at residues L269 to F290. Residues M291–A350 lie on the Extracellular side of the membrane. 2 disulfides stabilise this stretch: C298–C326 and C316–C332. The N-linked (GlcNAc...) asparagine glycan is linked to N328. Positions F351–M372 form an intramembrane region, pore-forming. The Selectivity filter of repeat I motif lies at T361–G364. Residue E363 participates in Ca(2+) binding. The Extracellular portion of the chain corresponds to Q373–L380. The helical transmembrane segment at P381–L401 threads the bilayer. The Cytoplasmic segment spans residues G402–N524. Residues Q428 to E445 are AID/alpha-interaction domain; mediates interaction with the beta subunit. Residues P449 to G481 form a disordered region. Residues S465–N478 show a composition bias toward polar residues. S469 bears the Phosphoserine mark. T476 is modified (phosphothreonine). The stretch at N510–L756 is one II repeat. The chain crosses the membrane as a helical span at residues V525–S543. The Extracellular portion of the chain corresponds to E544–E554. The chain crosses the membrane as a helical span at residues V555 to M575. The Cytoplasmic segment spans residues Y576–S586. Residues L587 to V606 traverse the membrane as a helical segment. The Extracellular segment spans residues E607–G615. A helical transmembrane segment spans residues I616–W634. Topologically, residues N635–S653 are cytoplasmic. A helical membrane pass occupies residues L654–F673. Topologically, residues G674–P693 are extracellular. An intramembrane region (pore-forming) is located at residues Q694 to G715. Positions T704–D707 match the Selectivity filter of repeat II motif. Residue E706 participates in Ca(2+) binding. At I716–P725 the chain is on the extracellular side. Residues G726–L745 traverse the membrane as a helical segment. Residues N746 to T900 are Cytoplasmic-facing. Positions S764–P861 are disordered. A compositionally biased stretch (basic and acidic residues) spans S783–L806. S808 and S815 each carry phosphoserine. The segment at S829 to E876 is interaction with STAC2. Positions A843–E852 are enriched in acidic residues. Residues N887 to F1169 form an III repeat. Residues I901–A919 traverse the membrane as a helical segment. The Extracellular portion of the chain corresponds to E920–H931. A helical membrane pass occupies residues I932 to K951. Over M952–N967 the chain is Cytoplasmic. The chain crosses the membrane as a helical span at residues Y968–I986. The Extracellular portion of the chain corresponds to Q987 to V993. Residues V994–A1012 traverse the membrane as a helical segment. The Cytoplasmic portion of the chain corresponds to K1013 to N1031. The helical transmembrane segment at I1032 to F1051 threads the bilayer. Residues K1052–V1101 are Extracellular-facing. An intrachain disulfide couples C1058 to C1069. Residues R1089–K1178 are dihydropyridine binding. Positions L1102–Y1122 form an intramembrane region, pore-forming. Residues T1113 to G1116 carry the Selectivity filter of repeat III motif. E1115 lines the Ca(2+) pocket. The Extracellular segment spans residues R1123–R1139. A helical membrane pass occupies residues V1140–F1161. The Cytoplasmic portion of the chain corresponds to V1162–T1219. The IV repeat unit spans residues N1206–F1479. The chain crosses the membrane as a helical span at residues Y1220–Y1241. The Extracellular portion of the chain corresponds to G1242 to I1249. A helical membrane pass occupies residues A1250–I1271. The Cytoplasmic portion of the chain corresponds to A1272–D1281. A helical membrane pass occupies residues P1282–S1301. Residues E1302 to S1324 lie on the Extracellular side of the membrane. A helical transmembrane segment spans residues I1325–G1343. The Cytoplasmic segment spans residues E1344–P1361. The chain crosses the membrane as a helical span at residues Y1362–F1382. Residues G1383–Q1404 are Extracellular-facing. N1388 is a glycosylation site (N-linked (GlcNAc...) asparagine). Residues A1405–L1423 constitute an intramembrane region (pore-forming). Positions T1414 to A1417 match the Selectivity filter of repeat IV motif. The Extracellular segment spans residues A1424–F1451. A dihydropyridine binding region spans residues K1430–K1498. C1431 and C1447 are joined by a disulfide. N1439 is a glycosylation site (N-linked (GlcNAc...) asparagine). A phenylalkylamine binding region spans residues E1444 to W1486. The helical transmembrane segment at A1452 to M1476 threads the bilayer. At D1477 to L2139 the chain is on the cytoplasmic side. The tract at residues D1611–G1638 is important for interaction with STAC1, STAC2 and STAC3. The segment at D1611–S1644 is calmodulin-binding. The calmodulin-binding IQ region stretch occupies residues K1617 to Q1637. Positions L1651 to S1670 are important for localization in at the junctional membrane. Residues S1670 and S1691 each carry the phosphoserine modification. 2 stretches are compositionally biased toward polar residues: residues K1732–E1741 and S1751–S1763. Positions K1732 to T1773 are disordered. Low complexity predominate over residues N1764–T1773. S1897 bears the Phosphoserine; by PKA mark. Residues R1940 to R1966 form a disordered region. Pro residues predominate over residues F1947–T1957.

This sequence belongs to the calcium channel alpha-1 subunit (TC 1.A.1.11) family. CACNA1C subfamily. As to quaternary structure, component of a calcium channel complex consisting of a pore-forming alpha subunit (CACNA1C) and ancillary beta, gamma and delta subunits. The channel complex contains alpha, beta, gamma and delta subunits in a 1:1:1:1 ratio, i.e. it contains only one of each type of subunit. CACNA1C channel activity is modulated by ancillary subunits, such as CACNB1, CACNB2, CACNB3, CACNA2D1 and CACNA2D4. Interacts with the gamma subunits CACNG4, CACNG6, CACNG7 and CACNG8. Interacts with CACNB1. Interacts with CACNB2. Identified in a complex with CACNA2D4 and CACNB3. Interacts with CACNB3. Interacts with CACNA2D1. Interacts with CACNA2D4. Interacts with CALM1. Interacts (via the N-terminus and the C-terminal C and IQ motifs) with CABP1; this inhibits Ca(2+)-dependent channel inactivation. The binding via the C motif is calcium independent whereas the binding via IQ requires the presence of calcium and is mutually exclusive with calmodulin binding. The binding to the cytoplasmic N-terminal domain is calcium independent but is essential for the channel modulation. Interacts (via C-terminal CDB motif) with CABP5; in a calcium-dependent manner. Interacts with CIB1; the interaction increases upon cardiomyocytes hypertrophy. Interacts with STAC2 and STAC3; this inhibits channel inactivation. Phosphorylation by PKA at Ser-1897 activates the channel. Elevated levels of blood glucose lead to increased phosphorylation by PKA. As to expression, detected in embryonic heart. Detected in retina in rod bipolar cells. Detected in tibialis artery (at protein level). Detected in smooth muscle cells from tibialis artery and in mesenteric artery. High expression in heart, followed by brain and spinal cord.

It localises to the cell membrane. The protein resides in the sarcolemma. Its subcellular location is the perikaryon. The protein localises to the postsynaptic density membrane. It is found in the cell projection. It localises to the dendrite. The protein resides in the T-tubule. It carries out the reaction Ca(2+)(in) = Ca(2+)(out). Its activity is regulated as follows. Inhibited by dihydropyridines (DHP), such as isradipine. Inhibited by nifedipine. Channel activity is regulated by Ca(2+) and calmodulin. Binding of STAC1, STAC2 or STAC3 to a region that overlaps with the calmodulin binding site inhibits channel inactivation by Ca(2+) and calmodulin. Binding of calmodulin or CABP1 at the same regulatory sites results in opposite effects on the channel function. Shear stress and pressure increases calcium channel activity. Functionally, pore-forming, alpha-1C subunit of the voltage-gated calcium channel that gives rise to L-type calcium currents. Mediates influx of calcium ions into the cytoplasm, and thereby triggers calcium release from the sarcoplasm. Plays an important role in excitation-contraction coupling in the heart. Required for normal heart development and normal regulation of heart rhythm. Required for normal contraction of smooth muscle cells in blood vessels and in the intestine. Essential for normal blood pressure regulation via its role in the contraction of arterial smooth muscle cells. Long-lasting (L-type) calcium channels belong to the 'high-voltage activated' (HVA) group. The polypeptide is Voltage-dependent L-type calcium channel subunit alpha-1C (Cacna1c) (Mus musculus (Mouse)).